The sequence spans 243 residues: 6-carboxyhexanoate--CoA ligase (243 aa).

Belongs to the BioW family. In terms of assembly, homodimer. It depends on Mg(2+) as a cofactor.

It catalyses the reaction heptanedioate + ATP + CoA = 6-carboxyhexanoyl-CoA + AMP + diphosphate. It participates in metabolic intermediate metabolism; pimeloyl-CoA biosynthesis; pimeloyl-CoA from pimelate: step 1/1. In terms of biological role, catalyzes the transformation of pimelate into pimeloyl-CoA with concomitant hydrolysis of ATP to AMP. In Corynebacterium pseudotuberculosis (strain FRC41), this protein is 6-carboxyhexanoate--CoA ligase.